We begin with the raw amino-acid sequence, 296 residues long: UDP-N-acetylenolpyruvoylglucosamine reductase (296 aa).

Residues 18–189 form the FAD-binding PCMH-type domain; it reads LGGRALAEVR…TGADIVLRRG (172 aa). R166 is an active-site residue. The active-site Proton donor is C218. Residue E289 is part of the active site.

It belongs to the MurB family. It depends on FAD as a cofactor.

The protein resides in the cytoplasm. It catalyses the reaction UDP-N-acetyl-alpha-D-muramate + NADP(+) = UDP-N-acetyl-3-O-(1-carboxyvinyl)-alpha-D-glucosamine + NADPH + H(+). It participates in cell wall biogenesis; peptidoglycan biosynthesis. Its function is as follows. Cell wall formation. The protein is UDP-N-acetylenolpyruvoylglucosamine reductase of Nitratidesulfovibrio vulgaris (strain ATCC 29579 / DSM 644 / CCUG 34227 / NCIMB 8303 / VKM B-1760 / Hildenborough) (Desulfovibrio vulgaris).